A 65-amino-acid chain; its full sequence is uncharacterized protein (65 aa).

Its subcellular location is the plastid. The protein resides in the chloroplast. This is an uncharacterized protein from Guillardia theta (Cryptophyte).